An 827-amino-acid chain; its full sequence is Lon protease (827 aa).

Positions 38–233 (LTLLASKYNV…VLLKYLLKDL (196 aa)) constitute a Lon N-terminal domain. 384–391 (GPPGVGKT) serves as a coordination point for ATP. The Lon proteolytic domain maps to 619 to 800 (THLPGVAIGL…EEVIQLALQP (182 aa)). Active-site residues include Ser-706 and Lys-749.

The protein belongs to the peptidase S16 family. As to quaternary structure, homohexamer. Organized in a ring with a central cavity.

The protein localises to the cytoplasm. It carries out the reaction Hydrolysis of proteins in presence of ATP.. Functionally, ATP-dependent serine protease that mediates the selective degradation of mutant and abnormal proteins as well as certain short-lived regulatory proteins. Required for cellular homeostasis and for survival from DNA damage and developmental changes induced by stress. Degrades polypeptides processively to yield small peptide fragments that are 5 to 10 amino acids long. Binds to DNA in a double-stranded, site-specific manner. In Amoebophilus asiaticus (strain 5a2), this protein is Lon protease.